We begin with the raw amino-acid sequence, 506 residues long: ATP synthase subunit alpha, chloroplastic (506 aa).

Residue 170 to 177 (GDRQTGKT) participates in ATP binding. The residue at position 257 (Thr257) is a Phosphothreonine.

It belongs to the ATPase alpha/beta chains family. F-type ATPases have 2 components, CF(1) - the catalytic core - and CF(0) - the membrane proton channel. CF(1) has five subunits: alpha(3), beta(3), gamma(1), delta(1), epsilon(1). CF(0) has four main subunits: a, b, b' and c.

It localises to the plastid. The protein localises to the chloroplast thylakoid membrane. It carries out the reaction ATP + H2O + 4 H(+)(in) = ADP + phosphate + 5 H(+)(out). Produces ATP from ADP in the presence of a proton gradient across the membrane. The alpha chain is a regulatory subunit. The protein is ATP synthase subunit alpha, chloroplastic of Olimarabidopsis pumila (Dwarf rocket).